A 283-amino-acid chain; its full sequence is ATP synthase gamma chain (283 aa).

It belongs to the ATPase gamma chain family. In terms of assembly, F-type ATPases have 2 components, CF(1) - the catalytic core - and CF(0) - the membrane proton channel. CF(1) has five subunits: alpha(3), beta(3), gamma(1), delta(1), epsilon(1). CF(0) has three main subunits: a, b and c.

The protein resides in the cell membrane. Its function is as follows. Produces ATP from ADP in the presence of a proton gradient across the membrane. The gamma chain is believed to be important in regulating ATPase activity and the flow of protons through the CF(0) complex. This chain is ATP synthase gamma chain, found in Desulforamulus reducens (strain ATCC BAA-1160 / DSM 100696 / MI-1) (Desulfotomaculum reducens).